The primary structure comprises 2193 residues: MPLPLPSAIVCGPQTNLPSQRNLDWLRSYLTQRPDVEHLLQAVLELPDLLSALQEHDHDLRLIPASSLKDLREWCLDHSIILQIPETLPNVLLAPLTVLIHIIQYLEYCDHLSSEDVHARVRQSIRNGGFQGLCTGSLSAAALACSTTRPEIGQNAAVALKLAMCVGAYVDLGLALEADSPMTCFIARWRHGSQREDVDQILNNFPQAYISVNMDECSATITASKASIPALRDSLRSKSIQFAKVQVNGRYHTASNTKFLENLLKFCRYQSNLRFPPTDYQNIPWRNNTTGKVVGRADQRHEICLRSILTEPASWYLTMSETVKTIVSATPDDCLIPILELGLISCVPSSLSSLPSVHVSRVVVPDEAQNIPELCDYNYTDECVAIVGAACKYPGAESLDELWRVISTAQTMNGQAPPQRYDPTDLRQGPSQSMDLSGNFISGVDQFDYSFFGISPREAMYMDPQQRIALQVAYRAVESSGYFGYGAQTTDFGCYLGVGGSDYEHNVNAHSPTAFSFIGTSRAFISGRISHFFRWTGPSMTIDTACSSSAVAIHQACRDILSGDCEMALAGGINVMSNSTTHQNLATANFLNATGTPCRSFDSGGNGYCRGEGCGLVVLKKLTAAVADGDHILGVIPATATNQSDGSSSITVPVSKQQISLYRRALSRAKMIPEDISYIEAHGTGTPRGDPIEWRSIHEVFGQARESSLNIGSVKGNIGHTEAASGVAGVLKVLLMIKYKQLPPQAHFTSLNHDIPSAQQKHVTVNKRSLQWNRRLRAACVNNYGASGNNTVIIVCEPPKAETTKTLIRDERGKQAGTSHPFWISGHSLGSLQRNIAVISKFVDMCHPTLDDVAFNVARMQNRSLRHRVVFGASSLEELQHRLKDPSHLSLDTHTTEDGPKPVVMVFSGQSGMTVHLHKAVYDASCLIRKHVDQCDTILRSIGLPSLFPGIFSQNPISDIVQLHCAIFTIQYACAAAWLDSGLSVQRVLGHSFGQLTAMCVAGIITPSDGLKLVSGRAKLIESKWGSEKGAMLSIKADRATAIALAQSEAKLGVEIACFNGPTSHVLVGSNAAIETVASKVSKSTVRKLNTSHGFHSRYIDSFLDEYLELAQSISYSTPTIPIETCSEISSWESFTPALVAEHSRKPVYFVDAVRRIKENLGSCVWLEAGSGSSGVTLAKSALNGSDSDSFHGLQLGTADALESLTETTLRLWKDRVSVQFWKHHRGENSLFKPLSIPGYQFDETSHWLPRAERVRSEPLSKKLPPMLSLENFSSPERHLSVFTIDQLSPEIAEILQARKVLDELLWPLSLYIELVSRAAALLTPALPREFQRLRVENFEIKSPLGSRVDARLELRLKLTEQRTWEWSLEGQTSAQTLPYATGRVVLEDRRRSGTEIQRSYLSILESRHCRGLLDDDTVFSASGSIAYKLLEKVAEYDLPYQAIASIKMNEQEALAQVSVPQAAGEWVKRKSVHPVLLDQFTLVAELHALSMIKCKRSEVFTCSEVRETVVYEELSPVSTASWTVYTCQSSLHGRVATYDIYVFDPASKTIIFSVLGAKFVKISSHILQEIVHRANSTPDLSENIFQIKAASPAMQTIQAADPLPTLATTLHSLPHVWSVAAQLVHELTGYAVERITAETMLCNVGMDSLATTELEHKIREILEVDINVQSFGKNVTFGSLVDIVSSQGSSRQAENIGSSVCSTPFTSSAGRSSPISEVDSCRILSDSMIKLCKIVEEYLGSTESVQPGMQLRSLGLDSLVTMELESELYKTFGQQLSLMQLGEEVTINELHDLMQSHPATVADERTESKQSIAREASQSPHFVDEAADRFAQAQDKIGEYAEAAQFLGFFDRVYPQQMSLVLAYVTEAFAALGCDLSEISPGSLIPCIPHIAKHDNVVAYYHNLLHQVGFIIPSDNGFIRTSEPCKRVDPGPLHLDIVHSFPYHGSEHKLLRRTGAQLADCLTGKADALRLLFSDKTTGELLQDVYTNAPMFKMGTLILGHFLPQALESFAATCKEPVRILELGAGTGGTTRYILDQLVTRGIPIRYTFTDISSTLVSRARDTFRAYDCVEYMTLNVEQINPEVAGSYDVILSSNCIHATKDLRHSCQGLYDLLRPKGMLCLLELTRDVPWLDLTFGLLDGWWRFDDGREHVLASEQMWKRLLQEAGFTHVDWSNDESRESDVFRLIMALKK.

Residues 90 to 252 (NVLLAPLTVL…AKVQVNGRYH (163 aa)) enclose the Starter acyltransferase (SAT) domain. The Ketosynthase family 3 (KS3) domain occupies 381–797 (DECVAIVGAA…GNNTVIIVCE (417 aa)). Residues cysteine 546, histidine 682, and histidine 720 each act as for beta-ketoacyl synthase activity in the active site. A Malonyl-CoA:ACP transacylase (MAT) domain is found at 906–1158 (VFSGQSGMTV…YFVDAVRRIK (253 aa)). Serine 992 (for acyl/malonyl transferase activity) is an active-site residue. An N-terminal hotdog fold region spans residues 1265-1392 (PPMLSLENFS…GRVVLEDRRR (128 aa)). One can recognise a PKS/mFAS DH domain in the interval 1265 to 1569 (PPMLSLENFS…FVKISSHILQ (305 aa)). The tract at residues 1419 to 1569 (VFSASGSIAY…FVKISSHILQ (151 aa)) is C-terminal hotdog fold. Aspartate 1479 (proton donor; for dehydratase activity) is an active-site residue. The 77-residue stretch at 1723–1799 (RILSDSMIKL…ELHDLMQSHP (77 aa)) folds into the Carrier domain. Serine 1759 is subject to O-(pantetheine 4'-phosphoryl)serine. Residues 1944 to 2177 (YHGSEHKLLR…GFTHVDWSND (234 aa)) are methyltransferase (CMeT) domain.

Pantetheine 4'-phosphate serves as cofactor.

It participates in secondary metabolite biosynthesis; terpenoid biosynthesis. Its function is as follows. Non-reducing polyketide synthase; part of the cluster that mediates the biosynthesis of shearones, diterpenoid pyrones (DPs) which are structurally diverse meroterpenoids consisting of a diterpene linked by a pyrone, and which may exhibit a range of bioactivities. Whitin the pathway, esdpA takes part to the biosynthesis of the molecular scaffold via the production of the alpha-pyrone from one molecule of acetyl-CoA, two molecules of malonyl-CoA and one molecule of S-adenosyl-L-methionine (SAM). The molecular scaffold is commonly biosynthesized by a series of enzymes including the non-reducing polyketide synthase (NR-PKS) esdpA that generates an alpha-pyrone; the prenyltransferase esdpC that attaches a geranylgeranyl pyrophosphate (GGPP) produced by the GGPP synthase (GGPPS) esdpD onto the pyrone unit; the FAD-dependent monooxygenase esdpE that converts an olefin on the diterpene unit into an epoxide; and the terpene cyclase esdpB that catalyzes the cyclization reactions to give the molecular backbone shearone A. In the modification steps, esdpF oxidizes the hydroxy group to a ketone at C-3 and esdpG then attaches hydroxy groups at both C-11 and C-12. After that, esdpI hydroxylates at C-20 and esdpH hydroxylates at C-6'. The ether bridge is generated by nucleophilic attack of the hydroxy group at C-20 to the carbonyl carbon at C-3. EsdpH can also functions prior to esdpI. The different combinations of these modification enzymes lead to the production of diverse shearone derivatives, shearone I being the end product of the pathway. The alpha-ketoglutarate-dependent dioxygenase esdpJ seems not to be involved in this pathway. The protein is Non-reducing polyketide synthase esdpA of Penicillium shearii (Eupenicillium shearii).